A 336-amino-acid chain; its full sequence is Poly(A) RNA polymerase cid12 (336 aa).

Aspartate 77 and aspartate 79 together coordinate Mg(2+). The 55-residue stretch at 209–263 folds into the PAP-associated domain; it reads ALLQKFFYFWGVEWTYELFVLRPLTGQIVPKLQKGWLNEVQPNLLSIEDPIDRNN. Serine 325 is modified (phosphoserine). Threonine 327 is modified (phosphothreonine). Serine 329 carries the phosphoserine modification.

This sequence belongs to the DNA polymerase type-B-like family. As to quaternary structure, cid12, hrr1 and rdp1 interact forming the RNA-directed RNA polymerase complex (RDRC). The RDRC complex interacts with the RITS complex via interaction between ago1 and hrr1. Clr4 has a role in mediating this interaction. It depends on Mg(2+) as a cofactor. Mn(2+) is required as a cofactor.

The protein localises to the cytoplasm. It is found in the nucleus. It catalyses the reaction RNA(n) + ATP = RNA(n)-3'-adenine ribonucleotide + diphosphate. In terms of biological role, has a role in the RNA interference (RNAi) pathway which is important for heterochromatin formation and accurate chromosome segregation. A member of the RNA-directed RNA polymerase complex (RDRC) which is involved in the generation of small interfering RNAs (siRNAs) and mediate their association with the RNA-induced transcriptional silencing (RITS) complex. RITS acts as a priming complex for dsRNA synthesis at the site of non-coding centromeric RNA. This is Poly(A) RNA polymerase cid12 (cid12) from Schizosaccharomyces pombe (strain 972 / ATCC 24843) (Fission yeast).